A 138-amino-acid polypeptide reads, in one-letter code: Putative pre-16S rRNA nuclease (138 aa).

It belongs to the YqgF nuclease family.

It is found in the cytoplasm. Could be a nuclease involved in processing of the 5'-end of pre-16S rRNA. This chain is Putative pre-16S rRNA nuclease, found in Porphyromonas gingivalis (strain ATCC BAA-308 / W83).